The primary structure comprises 97 residues: Pollen allergen Lol p 2-A (97 aa).

An Expansin-like CBD domain is found at 15 to 96 (KNLALSIKYN…DFKVGTTYKP (82 aa)).

The protein belongs to the expansin family. Expansin B subfamily.

The protein resides in the secreted. This chain is Pollen allergen Lol p 2-A, found in Lolium perenne (Perennial ryegrass).